The primary structure comprises 167 residues: Transcriptional repressor NrdR (167 aa).

The segment at 3 to 34 is a zinc-finger region; sequence CPFCRNPDSRVVDSRMADDGSAIRRRRQCPEC. Residues 46–136 form the ATP-cone domain; the sequence is LSVIKRSGVG…VYQAFESLED (91 aa). The segment at 148–167 is disordered; it reads AQEDAAERPATPRKPEKTSL.

The protein belongs to the NrdR family. It depends on Zn(2+) as a cofactor.

Negatively regulates transcription of bacterial ribonucleotide reductase nrd genes and operons by binding to NrdR-boxes. This chain is Transcriptional repressor NrdR, found in Pseudarthrobacter chlorophenolicus (strain ATCC 700700 / DSM 12829 / CIP 107037 / JCM 12360 / KCTC 9906 / NCIMB 13794 / A6) (Arthrobacter chlorophenolicus).